The chain runs to 790 residues: SH3 domain-containing protein 19 (790 aa).

Disordered stretches follow at residues 21 to 196 (EGQT…PVLQ) and 241 to 374 (EPIK…MDLQ). S65 bears the Phosphoserine mark. Polar residues predominate over residues 287–296 (NTFSTVSGKL). Residues 336–351 (QQPPTKVPPERPPPPK) show a composition bias toward pro residues. An interaction with SH3GL1 region spans residues 342-358 (VPPERPPPPKLSATRRS). Over residues 365–374 (NRSSSDMDLQ) the composition is skewed to polar residues. S369 carries the post-translational modification Phosphoserine. SH3 domains follow at residues 415 to 477 (LSVP…PLDE), 495 to 554 (SGAP…VIID), 571 to 630 (VKGS…PVED), 661 to 720 (LPAE…PCPA), and 730 to 789 (PKGR…FLQI). S762 is subject to Phosphoserine.

As to quaternary structure, interacts with ADAM12. Isoform 4 and isoform 5 (but not isoform 1 and isoform 2) interact with ADAM9, ADAM10, ADAM15 and ADAM17. Interacts with SH3GL1 SH3 domain. Interacts via SH3 3 and SH3 4 or SH3 4 and SH3 5 domains with SOS2. Probably forms a trimeric complex with SH3GL1 and SOS2. Interacts with SH3YL1. As to expression, widely expressed with highest levels in heart, skeletal muscle, kidney, liver, placenta, small intestine and lung. Expressed at low levels in colon, thymus, spleen and leukocytes.

Its subcellular location is the cytoplasm. It is found in the nucleus. Its function is as follows. May play a role in regulating A disintegrin and metalloproteases (ADAMs) in the signaling of EGFR-ligand shedding. May be involved in suppression of Ras-induced cellular transformation and Ras-mediated activation of ELK1. Plays a role in the regulation of cell morphology and cytoskeletal organization. The sequence is that of SH3 domain-containing protein 19 (SH3D19) from Homo sapiens (Human).